Here is a 311-residue protein sequence, read N- to C-terminus: tRNA pseudouridine synthase B (311 aa).

The active-site Nucleophile is the Asp49.

This sequence belongs to the pseudouridine synthase TruB family. Type 1 subfamily.

It catalyses the reaction uridine(55) in tRNA = pseudouridine(55) in tRNA. In terms of biological role, responsible for synthesis of pseudouridine from uracil-55 in the psi GC loop of transfer RNAs. The sequence is that of tRNA pseudouridine synthase B from Actinobacillus succinogenes (strain ATCC 55618 / DSM 22257 / CCUG 43843 / 130Z).